A 237-amino-acid polypeptide reads, in one-letter code: Leucyl/phenylalanyl-tRNA--protein transferase (237 aa).

This sequence belongs to the L/F-transferase family.

The protein resides in the cytoplasm. The catalysed reaction is N-terminal L-lysyl-[protein] + L-leucyl-tRNA(Leu) = N-terminal L-leucyl-L-lysyl-[protein] + tRNA(Leu) + H(+). The enzyme catalyses N-terminal L-arginyl-[protein] + L-leucyl-tRNA(Leu) = N-terminal L-leucyl-L-arginyl-[protein] + tRNA(Leu) + H(+). It carries out the reaction L-phenylalanyl-tRNA(Phe) + an N-terminal L-alpha-aminoacyl-[protein] = an N-terminal L-phenylalanyl-L-alpha-aminoacyl-[protein] + tRNA(Phe). Functionally, functions in the N-end rule pathway of protein degradation where it conjugates Leu, Phe and, less efficiently, Met from aminoacyl-tRNAs to the N-termini of proteins containing an N-terminal arginine or lysine. The chain is Leucyl/phenylalanyl-tRNA--protein transferase from Shewanella baltica (strain OS195).